The primary structure comprises 415 residues: Serine hydroxymethyltransferase 2 (415 aa).

(6S)-5,6,7,8-tetrahydrofolate contacts are provided by residues L121 and 125–127; that span reads GHL. Residue K229 is modified to N6-(pyridoxal phosphate)lysine.

Belongs to the SHMT family. In terms of assembly, homodimer. It depends on pyridoxal 5'-phosphate as a cofactor.

The protein localises to the cytoplasm. The catalysed reaction is (6R)-5,10-methylene-5,6,7,8-tetrahydrofolate + glycine + H2O = (6S)-5,6,7,8-tetrahydrofolate + L-serine. It functions in the pathway one-carbon metabolism; tetrahydrofolate interconversion. It participates in amino-acid biosynthesis; glycine biosynthesis; glycine from L-serine: step 1/1. Catalyzes the reversible interconversion of serine and glycine with tetrahydrofolate (THF) serving as the one-carbon carrier. This reaction serves as the major source of one-carbon groups required for the biosynthesis of purines, thymidylate, methionine, and other important biomolecules. Also exhibits THF-independent aldolase activity toward beta-hydroxyamino acids, producing glycine and aldehydes, via a retro-aldol mechanism. The sequence is that of Serine hydroxymethyltransferase 2 from Bordetella parapertussis (strain 12822 / ATCC BAA-587 / NCTC 13253).